Consider the following 386-residue polypeptide: 8-amino-7-oxononanoate synthase (386 aa).

A substrate-binding site is contributed by Arg-19. 106 to 107 (GY) contacts pyridoxal 5'-phosphate. His-131 lines the substrate pocket. The pyridoxal 5'-phosphate site is built by Ser-177, His-205, and Thr-233. The residue at position 236 (Lys-236) is an N6-(pyridoxal phosphate)lysine. Thr-350 is a substrate binding site.

The protein belongs to the class-II pyridoxal-phosphate-dependent aminotransferase family. BioF subfamily. In terms of assembly, homodimer. Pyridoxal 5'-phosphate serves as cofactor.

It catalyses the reaction 6-carboxyhexanoyl-[ACP] + L-alanine + H(+) = (8S)-8-amino-7-oxononanoate + holo-[ACP] + CO2. It functions in the pathway cofactor biosynthesis; biotin biosynthesis. Catalyzes the decarboxylative condensation of pimeloyl-[acyl-carrier protein] and L-alanine to produce 8-amino-7-oxononanoate (AON), [acyl-carrier protein], and carbon dioxide. The protein is 8-amino-7-oxononanoate synthase of Alcanivorax borkumensis (strain ATCC 700651 / DSM 11573 / NCIMB 13689 / SK2).